The sequence spans 262 residues: Type III pantothenate kinase (262 aa).

9–16 (DAGNSRIK) contributes to the ATP binding site. Substrate-binding positions include Tyr-96 and 103 to 106 (GSDR). The active-site Proton acceptor is Asp-105. Position 129 (Thr-129) interacts with ATP. Substrate is bound at residue Thr-189.

This sequence belongs to the type III pantothenate kinase family. Homodimer. It depends on NH4(+) as a cofactor. Requires K(+) as cofactor.

Its subcellular location is the cytoplasm. It carries out the reaction (R)-pantothenate + ATP = (R)-4'-phosphopantothenate + ADP + H(+). It functions in the pathway cofactor biosynthesis; coenzyme A biosynthesis; CoA from (R)-pantothenate: step 1/5. Catalyzes the phosphorylation of pantothenate (Pan), the first step in CoA biosynthesis. This chain is Type III pantothenate kinase, found in Burkholderia multivorans (strain ATCC 17616 / 249).